A 122-amino-acid polypeptide reads, in one-letter code: Large ribosomal subunit protein uL14c (122 aa).

This sequence belongs to the universal ribosomal protein uL14 family. Part of the 50S ribosomal subunit.

It localises to the plastid. The protein resides in the chloroplast. Its function is as follows. Binds to 23S rRNA. The sequence is that of Large ribosomal subunit protein uL14c from Ipomoea purpurea (Common morning glory).